We begin with the raw amino-acid sequence, 313 residues long: Cytochrome c biogenesis protein CcsA (313 aa).

The next 8 helical transmembrane spans lie at 9 to 29 (ILTH…LITF), 44 to 64 (GIIV…ISSG), 71 to 91 (LYES…IPYF), 111 to 131 (GFAT…VPAL), 143 to 163 (MILG…LLVI), 217 to 237 (VISL…VWAN), 244 to 264 (WNWD…AIYL), and 278 to 298 (AIVA…VNLL).

It belongs to the CcmF/CycK/Ccl1/NrfE/CcsA family. May interact with Ccs1.

The protein localises to the plastid. The protein resides in the chloroplast thylakoid membrane. Required during biogenesis of c-type cytochromes (cytochrome c6 and cytochrome f) at the step of heme attachment. The protein is Cytochrome c biogenesis protein CcsA of Solanum bulbocastanum (Wild potato).